A 456-amino-acid chain; its full sequence is F-box/FBD/LRR-repeat protein At1g13780 (456 aa).

The F-box domain occupies 9-55 (FDRISELPESLISQILLHLPTKASVKTSVLSTRWKNLWLNVPGLDLN). LRR repeat units follow at residues 197 to 220 (LEEL…SLKR), 243 to 266 (APGL…NLTS), 302 to 325 (ISSV…SKVG), and 355 to 379 (FPNL…ELVN). The region spanning 372–424 (MEKFELVNVPRCFVSTLEHVEIKGLFDWGEQDMKIASYFLENSAVLKKLILSF) is the FBD domain.

This chain is F-box/FBD/LRR-repeat protein At1g13780, found in Arabidopsis thaliana (Mouse-ear cress).